Here is a 403-residue protein sequence, read N- to C-terminus: Tryptophan synthase beta chain (403 aa).

At lysine 93 the chain carries N6-(pyridoxal phosphate)lysine.

The protein belongs to the TrpB family. Tetramer of two alpha and two beta chains. Requires pyridoxal 5'-phosphate as cofactor.

It carries out the reaction (1S,2R)-1-C-(indol-3-yl)glycerol 3-phosphate + L-serine = D-glyceraldehyde 3-phosphate + L-tryptophan + H2O. The protein operates within amino-acid biosynthesis; L-tryptophan biosynthesis; L-tryptophan from chorismate: step 5/5. The beta subunit is responsible for the synthesis of L-tryptophan from indole and L-serine. The sequence is that of Tryptophan synthase beta chain from Acinetobacter baylyi (strain ATCC 33305 / BD413 / ADP1).